The sequence spans 1335 residues: Probable serine/threonine-protein kinase ndrC (1335 aa).

Disordered stretches follow at residues 1 to 70 (MSRK…KKGS), 85 to 158 (VDTH…LIPS), 276 to 447 (LPPP…SPLN), and 462 to 603 (TTTT…NNNK). The segment covering 8-17 (NRSSSSNSIE) has biased composition (polar residues). Residues 27-41 (SNISNSSNINCNNSS) show a composition bias toward low complexity. Positions 55-70 (RSKHSSPIHSLKKKGS) are enriched in basic residues. A compositionally biased stretch (low complexity) spans 89-117 (SSSNSNNNSSSNNNNNNNNHNINSSSESS). Residues 118-132 (TPTTPRSSFTPQVTM) are compositionally biased toward polar residues. Residues 133–153 (NSNQSSGNNSPQLSSRSSSQS) show a composition bias toward low complexity. The segment covering 276 to 288 (LPPPSQQQLPPPQ) has biased composition (pro residues). Composition is skewed to low complexity over residues 289-331 (SHQQ…TPQS), 345-368 (NQQQIQSSQSTTPTNSSQKSSPNK), 382-396 (SPSPSSPSSPSSPSS), 412-424 (PTPLIITPSSPSS), 437-447 (PSSFSGGSPLN), and 462-484 (TTTTTTTTTTSSSSSLSVTTTIS). A compositionally biased stretch (polar residues) spans 485 to 497 (NPNYTQNLPTTPL). A compositionally biased stretch (low complexity) spans 498-507 (SNSSSNNNNN). The span at 508-528 (GSFITLQDTTNNKSIINNNRE) shows a compositional bias: polar residues. Residues 540–566 (SSGSSNTTSSTTNTTTPSSSSLTTSSG) are compositionally biased toward low complexity. The segment covering 567–581 (KESRDRDSKDKEKDL) has biased composition (basic and acidic residues). Residues 586-602 (NNNNNNNNNNNNNNNNN) show a composition bias toward low complexity. A coiled-coil region spans residues 586 to 613 (NNNNNNNNNNNNNNNNNKVEKEKENYCK). Residues 718-1019 (FKILTQIGKG…KQDFKNHPFF (302 aa)) form the Protein kinase domain. ATP contacts are provided by residues 724–732 (IGKGGFGQV) and Lys-747. Asp-840 (proton acceptor) is an active-site residue. The 87-residue stretch at 1020–1106 (KNHNWDEIVN…RKSSALSLSM (87 aa)) folds into the AGC-kinase C-terminal domain. Positions 1239–1284 (SQSQPSLANQLQSSSSSPSPSLQSQSQSPSLQSSSKSTPNLSSSLL) are enriched in low complexity. The interval 1239–1313 (SQSQPSLANQ…IKKENESEEI (75 aa)) is disordered. Residues 1287–1313 (PVKEELEYKNQTENEVEIKKENESEEI) show a composition bias toward basic and acidic residues. The stretch at 1289-1325 (KEELEYKNQTENEVEIKKENESEEIQSLRDQLKEIII) forms a coiled coil.

The protein belongs to the protein kinase superfamily. AGC Ser/Thr protein kinase family.

It carries out the reaction L-seryl-[protein] + ATP = O-phospho-L-seryl-[protein] + ADP + H(+). It catalyses the reaction L-threonyl-[protein] + ATP = O-phospho-L-threonyl-[protein] + ADP + H(+). This is Probable serine/threonine-protein kinase ndrC (ndrC) from Dictyostelium discoideum (Social amoeba).